The sequence spans 419 residues: Zinc metalloprotease RasP (419 aa).

Transmembrane regions (helical) follow at residues Val4–Ile24, Ile173–Leu193, Leu349–Asp369, and Glu391–Trp411. His18 contributes to the Zn(2+) binding site. Glu19 is an active-site residue. His22 is a Zn(2+) binding site. The 86-residue stretch at Ala184 to Ala269 folds into the PDZ domain.

The protein belongs to the peptidase M50B family. Requires Zn(2+) as cofactor.

It localises to the cell membrane. Its function is as follows. Is responsible for Site-2 cleavage of the RsiW anti-sigma factor. This results, after a third proteolytic step catalyzed by the ClpXP protease, in the release of SigW and the transcription activation of the genes under the control of the sigma-W factor. In Bacillus licheniformis (strain ATCC 14580 / DSM 13 / JCM 2505 / CCUG 7422 / NBRC 12200 / NCIMB 9375 / NCTC 10341 / NRRL NRS-1264 / Gibson 46), this protein is Zinc metalloprotease RasP (rasP).